Consider the following 193-residue polypeptide: MNKDHEEQLEINEVSQKNKYKSIIESLLFMSGEPINIKDLATILNCKQDKVSSLLNEMKNSYVGKDRGIKILIHNRAVQLVTKPENSIYVEKLLKTNVRQSLSQAALETLSIIAYKQPITRVAIDEIRGVKSDRAIYTLLEKNIIKECGRLDVPGKPILYGTTEEFLKFFGLDSIEAIPNLEDLLKEFSKEEN.

Belongs to the ScpB family. As to quaternary structure, homodimer. Homodimerization may be required to stabilize the binding of ScpA to the Smc head domains. Component of a cohesin-like complex composed of ScpA, ScpB and the Smc homodimer, in which ScpA and ScpB bind to the head domain of Smc. The presence of the three proteins is required for the association of the complex with DNA.

Its subcellular location is the cytoplasm. In terms of biological role, participates in chromosomal partition during cell division. May act via the formation of a condensin-like complex containing Smc and ScpA that pull DNA away from mid-cell into both cell halves. The protein is Segregation and condensation protein B of Clostridium botulinum (strain 657 / Type Ba4).